The primary structure comprises 409 residues: Phospho-N-acetylmuramoyl-pentapeptide-transferase (409 aa).

10 helical membrane-spanning segments follow: residues 23-43 (YITF…TIFG), 73-93 (TPTM…LLLA), 95-115 (LNNI…AIGF), 132-152 (GIFK…TLYF), 214-234 (YAWL…SNGA), 247-267 (TSAI…NVIF), 279-299 (SGEM…FLWY), 305-325 (AVFM…VLAI), 331-351 (MLIP…VLQV), and 386-406 (KIVT…IVTL).

It belongs to the glycosyltransferase 4 family. MraY subfamily. Requires Mg(2+) as cofactor.

It localises to the cell inner membrane. It carries out the reaction UDP-N-acetyl-alpha-D-muramoyl-L-alanyl-gamma-D-glutamyl-meso-2,6-diaminopimeloyl-D-alanyl-D-alanine + di-trans,octa-cis-undecaprenyl phosphate = di-trans,octa-cis-undecaprenyl diphospho-N-acetyl-alpha-D-muramoyl-L-alanyl-D-glutamyl-meso-2,6-diaminopimeloyl-D-alanyl-D-alanine + UMP. Its pathway is cell wall biogenesis; peptidoglycan biosynthesis. Catalyzes the initial step of the lipid cycle reactions in the biosynthesis of the cell wall peptidoglycan: transfers peptidoglycan precursor phospho-MurNAc-pentapeptide from UDP-MurNAc-pentapeptide onto the lipid carrier undecaprenyl phosphate, yielding undecaprenyl-pyrophosphoryl-MurNAc-pentapeptide, known as lipid I. This is Phospho-N-acetylmuramoyl-pentapeptide-transferase from Flavobacterium psychrophilum (strain ATCC 49511 / DSM 21280 / CIP 103535 / JIP02/86).